The following is a 214-amino-acid chain: Adenylate kinase (214 aa).

ATP is bound at residue 10 to 15 (GAGKGT). The tract at residues 30-59 (STGDMLRAAVKAGTPLGLEAKKVMDAGQLV) is NMP. Residues T31, R36, 57–59 (QLV), 85–88 (GFPR), and Q92 each bind AMP. Positions 122–159 (GRRVHSGSGRVYHVVFNPPKVEGKDDVTGEDLSIRPDD) are LID. ATP-binding positions include R123 and 132–133 (VY). R156 and R167 together coordinate AMP. ATP is bound at residue Q200.

It belongs to the adenylate kinase family. In terms of assembly, monomer.

It is found in the cytoplasm. The enzyme catalyses AMP + ATP = 2 ADP. It functions in the pathway purine metabolism; AMP biosynthesis via salvage pathway; AMP from ADP: step 1/1. Its function is as follows. Catalyzes the reversible transfer of the terminal phosphate group between ATP and AMP. Plays an important role in cellular energy homeostasis and in adenine nucleotide metabolism. The protein is Adenylate kinase of Shewanella frigidimarina (strain NCIMB 400).